We begin with the raw amino-acid sequence, 45 residues long: Lysis protein for colicin E1 (45 aa).

The signal sequence occupies residues methionine 1–glycine 17. A lipid anchor (N-palmitoyl cysteine) is attached at cysteine 18. Cysteine 18 is lipidated: S-diacylglycerol cysteine.

The protein resides in the cell outer membrane. Lysis proteins are required for both colicin release and partial cell lysis. The chain is Lysis protein for colicin E1 (lys) from Escherichia coli.